A 270-amino-acid polypeptide reads, in one-letter code: Formamidopyrimidine-DNA glycosylase (270 aa).

P2 functions as the Schiff-base intermediate with DNA in the catalytic mechanism. The Proton donor role is filled by E3. The Proton donor; for beta-elimination activity role is filled by K57. H90, R109, and K150 together coordinate DNA. The FPG-type zinc-finger motif lies at 235 to 269 (LVYGNKDKPCPRCGTKIKSIIIGQRNSFFCPQCQK). R259 (proton donor; for delta-elimination activity) is an active-site residue.

It belongs to the FPG family. In terms of assembly, monomer. It depends on Zn(2+) as a cofactor.

The enzyme catalyses Hydrolysis of DNA containing ring-opened 7-methylguanine residues, releasing 2,6-diamino-4-hydroxy-5-(N-methyl)formamidopyrimidine.. The catalysed reaction is 2'-deoxyribonucleotide-(2'-deoxyribose 5'-phosphate)-2'-deoxyribonucleotide-DNA = a 3'-end 2'-deoxyribonucleotide-(2,3-dehydro-2,3-deoxyribose 5'-phosphate)-DNA + a 5'-end 5'-phospho-2'-deoxyribonucleoside-DNA + H(+). Functionally, involved in base excision repair of DNA damaged by oxidation or by mutagenic agents. Acts as a DNA glycosylase that recognizes and removes damaged bases. Has a preference for oxidized purines, such as 7,8-dihydro-8-oxoguanine (8-oxoG). Has AP (apurinic/apyrimidinic) lyase activity and introduces nicks in the DNA strand. Cleaves the DNA backbone by beta-delta elimination to generate a single-strand break at the site of the removed base with both 3'- and 5'-phosphates. This chain is Formamidopyrimidine-DNA glycosylase, found in Histophilus somni (strain 2336) (Haemophilus somnus).